The sequence spans 362 residues: UDP-N-acetylglucosamine--N-acetylmuramyl-(pentapeptide) pyrophosphoryl-undecaprenol N-acetylglucosamine transferase (362 aa).

Residues 14–16 (TGG), asparagine 126, arginine 166, serine 193, and glutamine 294 each bind UDP-N-acetyl-alpha-D-glucosamine.

This sequence belongs to the glycosyltransferase 28 family. MurG subfamily.

It localises to the cell inner membrane. The catalysed reaction is di-trans,octa-cis-undecaprenyl diphospho-N-acetyl-alpha-D-muramoyl-L-alanyl-D-glutamyl-meso-2,6-diaminopimeloyl-D-alanyl-D-alanine + UDP-N-acetyl-alpha-D-glucosamine = di-trans,octa-cis-undecaprenyl diphospho-[N-acetyl-alpha-D-glucosaminyl-(1-&gt;4)]-N-acetyl-alpha-D-muramoyl-L-alanyl-D-glutamyl-meso-2,6-diaminopimeloyl-D-alanyl-D-alanine + UDP + H(+). The protein operates within cell wall biogenesis; peptidoglycan biosynthesis. Cell wall formation. Catalyzes the transfer of a GlcNAc subunit on undecaprenyl-pyrophosphoryl-MurNAc-pentapeptide (lipid intermediate I) to form undecaprenyl-pyrophosphoryl-MurNAc-(pentapeptide)GlcNAc (lipid intermediate II). This Paracoccus denitrificans (strain Pd 1222) protein is UDP-N-acetylglucosamine--N-acetylmuramyl-(pentapeptide) pyrophosphoryl-undecaprenol N-acetylglucosamine transferase.